A 234-amino-acid polypeptide reads, in one-letter code: ATP-dependent dethiobiotin synthetase BioD (234 aa).

An ATP-binding site is contributed by 12 to 17; sequence GAGKTI. Residue T16 participates in Mg(2+) binding. Residue K39 is part of the active site. Residue T43 participates in substrate binding. ATP-binding positions include D47, 108 to 111, 168 to 169, and 200 to 202; these read EGLG, SC, and PYL. Residues D47 and E108 each contribute to the Mg(2+) site.

Belongs to the dethiobiotin synthetase family. Homodimer. Mg(2+) is required as a cofactor.

Its subcellular location is the cytoplasm. It catalyses the reaction (7R,8S)-7,8-diammoniononanoate + CO2 + ATP = (4R,5S)-dethiobiotin + ADP + phosphate + 3 H(+). It carries out the reaction (7R,8S)-8-amino-7-(carboxyamino)nonanoate + ATP = (4R,5S)-dethiobiotin + ADP + phosphate + H(+). The protein operates within cofactor biosynthesis; biotin biosynthesis; biotin from 7,8-diaminononanoate: step 1/2. Catalyzes a mechanistically unusual reaction, the ATP-dependent insertion of CO2 between the N7 and N8 nitrogen atoms of 7,8-diaminopelargonic acid (DAPA, also called 7,8-diammoniononanoate) to form a ureido ring. This cyanobacterium does not encode bioA (which catalyzes the formation of the precursor for this reaction in the cannonical pathway), instead it encodes bioU, which replaces bioA and also performs the first half of the cannonical BioD reaction. Thus in this organism BioD has a different substrate. The sequence is that of ATP-dependent dethiobiotin synthetase BioD from Rippkaea orientalis (strain PCC 8801 / RF-1) (Cyanothece sp. (strain PCC 8801)).